Reading from the N-terminus, the 324-residue chain is Glyoxylate/hydroxypyruvate reductase B (324 aa).

Catalysis depends on residues Arg237 and Glu266. Catalysis depends on His285, which acts as the Proton donor.

It belongs to the D-isomer specific 2-hydroxyacid dehydrogenase family. GhrB subfamily. As to quaternary structure, homodimer.

The protein resides in the cytoplasm. The catalysed reaction is glycolate + NADP(+) = glyoxylate + NADPH + H(+). It catalyses the reaction (R)-glycerate + NAD(+) = 3-hydroxypyruvate + NADH + H(+). The enzyme catalyses (R)-glycerate + NADP(+) = 3-hydroxypyruvate + NADPH + H(+). In terms of biological role, catalyzes the NADPH-dependent reduction of glyoxylate and hydroxypyruvate into glycolate and glycerate, respectively. This is Glyoxylate/hydroxypyruvate reductase B from Shigella flexneri serotype 5b (strain 8401).